The primary structure comprises 231 residues: Flagellar L-ring protein (231 aa).

Residues Met1–Gly18 form the signal peptide. The N-palmitoyl cysteine moiety is linked to residue Cys19. A lipid anchor (S-diacylglycerol cysteine) is attached at Cys19. Positions Leu118–Ser141 are disordered.

It belongs to the FlgH family. As to quaternary structure, the basal body constitutes a major portion of the flagellar organelle and consists of four rings (L,P,S, and M) mounted on a central rod.

The protein localises to the cell outer membrane. Its subcellular location is the bacterial flagellum basal body. Assembles around the rod to form the L-ring and probably protects the motor/basal body from shearing forces during rotation. This is Flagellar L-ring protein from Pseudomonas paraeruginosa (strain DSM 24068 / PA7) (Pseudomonas aeruginosa (strain PA7)).